The chain runs to 100 residues: Small ribosomal subunit protein uS14c (100 aa).

It belongs to the universal ribosomal protein uS14 family. In terms of assembly, part of the 30S ribosomal subunit.

It localises to the plastid. The protein resides in the chloroplast. Its function is as follows. Binds 16S rRNA, required for the assembly of 30S particles. The sequence is that of Small ribosomal subunit protein uS14c from Stigeoclonium helveticum (Green alga).